Here is a 195-residue protein sequence, read N- to C-terminus: dCTP deaminase (195 aa).

Residues 110–115 (RSSLAR), Asp-128, 136–138 (VLE), Tyr-171, Lys-178, and Gln-182 contribute to the dCTP site. Glu-138 acts as the Proton donor/acceptor in catalysis. The tract at residues 171 to 195 (YSSRKDAKYKNQQSAVASRIDEDKE) is disordered.

The protein belongs to the dCTP deaminase family. Homotrimer.

The catalysed reaction is dCTP + H2O + H(+) = dUTP + NH4(+). It participates in pyrimidine metabolism; dUMP biosynthesis; dUMP from dCTP (dUTP route): step 1/2. Its function is as follows. Catalyzes the deamination of dCTP to dUTP. This is dCTP deaminase from Haemophilus influenzae (strain ATCC 51907 / DSM 11121 / KW20 / Rd).